Here is a 166-residue protein sequence, read N- to C-terminus: Shikimate kinase (166 aa).

11 to 16 contacts ATP; sequence GSGKST. Ser-15 contacts Mg(2+). 3 residues coordinate substrate: Asp-33, Arg-57, and Gly-79. Position 117 (Arg-117) interacts with ATP. Arg-134 is a binding site for substrate.

This sequence belongs to the shikimate kinase family. Monomer. Mg(2+) is required as a cofactor.

The protein localises to the cytoplasm. The enzyme catalyses shikimate + ATP = 3-phosphoshikimate + ADP + H(+). Its pathway is metabolic intermediate biosynthesis; chorismate biosynthesis; chorismate from D-erythrose 4-phosphate and phosphoenolpyruvate: step 5/7. Functionally, catalyzes the specific phosphorylation of the 3-hydroxyl group of shikimic acid using ATP as a cosubstrate. The sequence is that of Shikimate kinase from Sulfurihydrogenibium sp. (strain YO3AOP1).